The sequence spans 597 residues: TOX high mobility group box family member 4 (597 aa).

2 disordered regions span residues 160–224 (GAIL…EPQK) and 520–546 (VQEESPPPQMDVELVSSSPPPSLSPQP). Basic residues predominate over residues 207 to 217 (KPKTPKKKKKK). Positions 212-217 (KKKKKK) match the Nuclear localization signal motif. The segment at residues 222-290 (PQKPLSAYAL…EYLKALALYK (69 aa)) is a DNA-binding region (HMG box).

As to quaternary structure, component of the PNUTS-PP1 phosphatase complex.

The protein localises to the nucleus. The protein resides in the chromosome. Its function is as follows. Transcription factor that modulates cell fate reprogramming from the somatic state to the pluripotent and neuronal fate. Also acts as a regulatory component of protein phosphatase 1 (PP1) complexes. Component of the PNUTS-PP1 protein phosphatase complex, a PP1 complex that regulates RNA polymerase II transcription pause-release. PNUTS-PP1 also plays a role in the control of chromatin structure and cell cycle progression during the transition from mitosis into interphase. The protein is TOX high mobility group box family member 4 (tox4) of Xenopus tropicalis (Western clawed frog).